A 597-amino-acid polypeptide reads, in one-letter code: Adenine deaminase 2 (597 aa).

This sequence belongs to the metallo-dependent hydrolases superfamily. Adenine deaminase family. It depends on Mn(2+) as a cofactor.

The catalysed reaction is adenine + H2O + H(+) = hypoxanthine + NH4(+). The protein is Adenine deaminase 2 of Agrobacterium fabrum (strain C58 / ATCC 33970) (Agrobacterium tumefaciens (strain C58)).